A 265-amino-acid chain; its full sequence is Polyprenol monophosphomannose synthase (265 aa).

The span at 1 to 10 shows a compositional bias: basic and acidic residues; that stretch reads MSVPGEREQG. The tract at residues 1–21 is disordered; that stretch reads MSVPGEREQGAGEDPATVRPT.

It belongs to the glycosyltransferase 2 family. Interacts with Lnt (also called Ppm2, AC A0QZ13) upon coexpression in E.coli, which increases the PPM synthase activity of this protein.

The protein localises to the cytoplasm. The catalysed reaction is a di-trans,poly-cis-dolichyl phosphate + GDP-alpha-D-mannose = a di-trans,poly-cis-dolichyl beta-D-mannosyl phosphate + GDP. Transfers mannose from GDP-mannose to lipid acceptors to form polyprenol monophosphomannose (PPM); catalytic activity in vitro is enhanced by Lnt (AC A0QZ13). PMM is an alkai-stable sugar donor which adds mannose-phosphate residues to triacylated-PIM2, eventually leading to generation of the cell wall glycolipid lipoglycan modulins lipoarabinomannan (LAM) and lipomannan (LM). This Mycolicibacterium smegmatis (strain ATCC 700084 / mc(2)155) (Mycobacterium smegmatis) protein is Polyprenol monophosphomannose synthase.